Here is a 413-residue protein sequence, read N- to C-terminus: Protein trichome birefringence-like 9 (413 aa).

A helical; Signal-anchor for type II membrane protein membrane pass occupies residues 22-42 (LFVSLFLLSLLIFSTVVVDVM). Positions 141–143 (GDS) match the GDS motif motif. The DCXHWCLPGXXDXWN motif motif lies at 384-398 (DCSHWCLPGVPDTWN).

Belongs to the PC-esterase family. TBL subfamily.

Its subcellular location is the membrane. Functionally, may act as a bridging protein that binds pectin and other cell wall polysaccharides. Probably involved in maintaining esterification of pectins. May be involved in the specific O-acetylation of cell wall polymers. The protein is Protein trichome birefringence-like 9 (TBL9) of Arabidopsis thaliana (Mouse-ear cress).